The chain runs to 246 residues: Ubiquinone biosynthesis O-methyltransferase (246 aa).

Positions 44, 63, 84, and 128 each coordinate S-adenosyl-L-methionine.

Belongs to the methyltransferase superfamily. UbiG/COQ3 family.

The enzyme catalyses a 3-demethylubiquinol + S-adenosyl-L-methionine = a ubiquinol + S-adenosyl-L-homocysteine + H(+). The catalysed reaction is a 3-(all-trans-polyprenyl)benzene-1,2-diol + S-adenosyl-L-methionine = a 2-methoxy-6-(all-trans-polyprenyl)phenol + S-adenosyl-L-homocysteine + H(+). It participates in cofactor biosynthesis; ubiquinone biosynthesis. O-methyltransferase that catalyzes the 2 O-methylation steps in the ubiquinone biosynthetic pathway. The sequence is that of Ubiquinone biosynthesis O-methyltransferase from Xylella fastidiosa (strain 9a5c).